The sequence spans 1907 residues: Chromatin modification-related protein EAF1 B (1907 aa).

Disordered regions lie at residues A108–V208, N261–T287, G323–N373, and N449–K469. A compositionally biased stretch (basic and acidic residues) spans S140–L151. Composition is skewed to polar residues over residues N261 to T270, G333 to N342, and T355 to A372. In terms of domain architecture, HSA spans C563 to S641. 2 disordered regions span residues S836–K909 and A928–L952. Residues R856–V866 are compositionally biased toward basic residues. Polar residues-rich tracts occupy residues T884–Y898 and Q942–L952. One can recognise an SANT domain in the interval S1049–K1105. 8 disordered regions span residues A1107–P1131, P1235–S1266, L1296–H1319, G1429–A1465, Y1477–N1594, V1638–T1703, V1767–N1791, and V1824–E1907. Composition is skewed to polar residues over residues D1116–S1125, A1242–S1266, L1296–A1310, L1431–L1444, and Q1453–Q1462. A compositionally biased stretch (low complexity) spans P1493–Q1512. The span at T1513–P1529 shows a compositional bias: pro residues. Polar residues-rich tracts occupy residues N1532 to Q1545, S1554 to K1568, R1585 to N1594, P1640 to Q1655, P1662 to P1672, P1681 to T1703, Q1769 to T1782, and V1824 to L1844. Basic and acidic residues-rich tracts occupy residues S1863–E1872 and L1882–E1892.

The protein belongs to the EAF1 family. Component of the NuA4 histone acetyltransferase complex. Interacts with ARP4 and SWC4, and (via HSA domain) with TAF14 and TAF14B. In terms of tissue distribution, expressed in leaves.

Its subcellular location is the nucleus. Functionally, component of the NuA4 histone acetyltransferase complex which is involved in transcriptional activation of selected genes principally by acetylation of nucleosomal histone H4 and H2A. The polypeptide is Chromatin modification-related protein EAF1 B (EAF1B) (Arabidopsis thaliana (Mouse-ear cress)).